A 359-amino-acid polypeptide reads, in one-letter code: Serpentine receptor class epsilon-26 (359 aa).

7 helical membrane passes run 29–49, 66–86, 127–147, 172–192, 195–215, 256–276, and 282–302; these read CAIS…VFVS, IGVP…ITIL, VAGF…LAIV, FIII…FNIL, YVLN…YYYI, LVFV…ALVL, and FFMH…FLVV.

Belongs to the nematode receptor-like protein sre family.

The protein resides in the membrane. This is Serpentine receptor class epsilon-26 (sre-26) from Caenorhabditis elegans.